The chain runs to 197 residues: Large ribosomal subunit protein uL5 (197 aa).

This sequence belongs to the universal ribosomal protein uL5 family. As to quaternary structure, part of the 50S ribosomal subunit; contacts the 5S rRNA and probably tRNA. Forms a bridge to the 30S subunit in the 70S ribosome.

This is one of the proteins that bind and probably mediate the attachment of the 5S RNA into the large ribosomal subunit, where it forms part of the central protuberance. In the 70S ribosome it contacts protein S13 of the 30S subunit (bridge B1b), connecting the 2 subunits; this bridge is implicated in subunit movement. May contact the P site tRNA; the 5S rRNA and some of its associated proteins might help stabilize positioning of ribosome-bound tRNAs. This chain is Large ribosomal subunit protein uL5, found in Caldivirga maquilingensis (strain ATCC 700844 / DSM 13496 / JCM 10307 / IC-167).